The following is an 80-amino-acid chain: Large ribosomal subunit protein bL31B (80 aa).

It belongs to the bacterial ribosomal protein bL31 family. Type B subfamily. As to quaternary structure, part of the 50S ribosomal subunit.

The sequence is that of Large ribosomal subunit protein bL31B from Streptococcus thermophilus (strain CNRZ 1066).